The sequence spans 156 residues: Small ribosomal subunit protein uS7 (156 aa).

Belongs to the universal ribosomal protein uS7 family. In terms of assembly, part of the 30S ribosomal subunit. Contacts proteins S9 and S11.

Its function is as follows. One of the primary rRNA binding proteins, it binds directly to 16S rRNA where it nucleates assembly of the head domain of the 30S subunit. Is located at the subunit interface close to the decoding center, probably blocks exit of the E-site tRNA. The protein is Small ribosomal subunit protein uS7 of Polynucleobacter necessarius subsp. necessarius (strain STIR1).